The following is a 185-amino-acid chain: Hypoxanthine/guanine phosphoribosyltransferase (185 aa).

The protein belongs to the purine/pyrimidine phosphoribosyltransferase family. Archaeal HPRT subfamily. Homodimer.

The protein resides in the cytoplasm. The enzyme catalyses IMP + diphosphate = hypoxanthine + 5-phospho-alpha-D-ribose 1-diphosphate. The catalysed reaction is GMP + diphosphate = guanine + 5-phospho-alpha-D-ribose 1-diphosphate. The protein operates within purine metabolism; IMP biosynthesis via salvage pathway; IMP from hypoxanthine: step 1/1. Its function is as follows. Catalyzes a salvage reaction resulting in the formation of IMP that is energically less costly than de novo synthesis. The protein is Hypoxanthine/guanine phosphoribosyltransferase of Methanococcus maripaludis (strain C5 / ATCC BAA-1333).